Consider the following 95-residue polypeptide: Large ribosomal subunit protein uL23 (95 aa).

Belongs to the universal ribosomal protein uL23 family. As to quaternary structure, part of the 50S ribosomal subunit. Contacts protein L29, and trigger factor when it is bound to the ribosome.

One of the early assembly proteins it binds 23S rRNA. One of the proteins that surrounds the polypeptide exit tunnel on the outside of the ribosome. Forms the main docking site for trigger factor binding to the ribosome. The sequence is that of Large ribosomal subunit protein uL23 from Deinococcus deserti (strain DSM 17065 / CIP 109153 / LMG 22923 / VCD115).